Reading from the N-terminus, the 535-residue chain is Cytochrome P450 4c3 (535 aa).

Heme is bound by residues Glu-342 and Cys-481.

Belongs to the cytochrome P450 family. The cofactor is heme.

The protein localises to the endoplasmic reticulum membrane. It localises to the microsome membrane. Its function is as follows. May be involved in the metabolism of insect hormones and in the breakdown of synthetic insecticides. The polypeptide is Cytochrome P450 4c3 (Cyp4c3) (Drosophila melanogaster (Fruit fly)).